A 42-amino-acid chain; its full sequence is F420-non-reducing hydrogenase vhu subunit U (42 aa).

Residues selenocysteine 21 and cysteine 24 each contribute to the Ni(2+) site. Selenocysteine 21 is a non-standard amino acid (selenocysteine). The propeptide at 28 to 42 is removed in mature form; that stretch reads VLDRVKFRIERKDED.

It belongs to the [NiFe]/[NiFeSe] hydrogenase large subunit family. As to quaternary structure, the F420-non-reducing hydrogenase vhu is composed of four subunits; VhuA, VhuD, VhuG and VhuU. Requires Ni(2+) as cofactor.

In Methanopyrus kandleri (strain AV19 / DSM 6324 / JCM 9639 / NBRC 100938), this protein is F420-non-reducing hydrogenase vhu subunit U (vhuU).